The following is a 350-amino-acid chain: Erythronate-4-phosphate dehydrogenase (350 aa).

Positions 45 and 66 each coordinate substrate. NAD(+) contacts are provided by residues 124 to 125, aspartate 144, 203 to 205, and aspartate 226; these read QV and ASR. Arginine 205 is an active-site residue. The active site involves glutamate 231. Histidine 248 functions as the Proton donor in the catalytic mechanism. An NAD(+)-binding site is contributed by glycine 251.

It belongs to the D-isomer specific 2-hydroxyacid dehydrogenase family. PdxB subfamily. In terms of assembly, homodimer.

It localises to the cytoplasm. It catalyses the reaction 4-phospho-D-erythronate + NAD(+) = (R)-3-hydroxy-2-oxo-4-phosphooxybutanoate + NADH + H(+). It participates in cofactor biosynthesis; pyridoxine 5'-phosphate biosynthesis; pyridoxine 5'-phosphate from D-erythrose 4-phosphate: step 2/5. Its function is as follows. Catalyzes the oxidation of erythronate-4-phosphate to 3-hydroxy-2-oxo-4-phosphonooxybutanoate. This chain is Erythronate-4-phosphate dehydrogenase, found in Legionella pneumophila subsp. pneumophila (strain Philadelphia 1 / ATCC 33152 / DSM 7513).